Here is a 764-residue protein sequence, read N- to C-terminus: MFSLKQPKPSFKSYLLPLQQEDKLNPETKIKKLKPVLLPGEIVVNEVNFVRKCIASDTSQYDLWGKLVCTNFKISFITENSVPFQRFHYKNLLLGEHDVPLTCIEQIVVVNDTKRKQKILSHNQKLKFNPTELIIYCKDFRILRFRFDEAGPESAKKVCLALAHYSQPTDLQLLFAFEYVAQMYHKLDKVNGIDPGGGGDFCQRTPLFESYSDWDREIKRTGASDWRVCSVNEGYMISTCLPEYFVVPSSLADQDLKQYSHAFVGRRMPLWCWNHSNGSALVRMASIKDLLQQRKIDQRVCSGITRSHPLRSEVYKCDLDDNVPSIQDIQAAFSKLRQLCVNEPFDETEEKWLSSLENTRWLEFVRMFLKQAAELVYMLDFSRRSVVLQEEEGRDLSCVVASLVQLMLDPYFRTIIGFQSLIQKEWVMSAYPFLDRCNHLKRSDKESPLFVLFLDCVWQLLQQYPAAFQFTETYLTVVHDSSRISLFGTFMFNSPHQRVQQSTEFAIGKNIQLGEEKGLKFPSVWDWSLQFSAKDRALFNNPLYIGKSVPCVQNGAVKSFKRTKKNYSSTMRGMPPSVKNGMSIQQEIMPRRNSLILKLKPEILQQVPVIPGNGFEQYFRDWFSKPADLHGVILPCLHGTHIQIWKLCYLRWTPEAQINHGGFITAFHKISLLASEIEVLQSRLRQYRAYPMATVTSPVGEQNQMFFRPDELHSSNGSLDILSSSFPFSPIGNLCRRSILGTPLSKFLNGAKIWLSTETLANED.

The region spanning 208–649 (FESYSDWDRE…THIQIWKLCY (442 aa)) is the Myotubularin phosphatase domain.

This sequence belongs to the protein-tyrosine phosphatase family. Non-receptor class myotubularin subfamily.

The chain is Myotubularin-related protein 10-B (mtmr10-b) from Xenopus laevis (African clawed frog).